The primary structure comprises 179 residues: ATP synthase subunit b (179 aa).

The helical transmembrane segment at 29–48 threads the bilayer; the sequence is VINLAILIGVLVYFGRGVLG.

Belongs to the ATPase B chain family. F-type ATPases have 2 components, F(1) - the catalytic core - and F(0) - the membrane proton channel. F(1) has five subunits: alpha(3), beta(3), gamma(1), delta(1), epsilon(1). F(0) has four main subunits: a(1), b(1), b'(1) and c(10-14). The alpha and beta chains form an alternating ring which encloses part of the gamma chain. F(1) is attached to F(0) by a central stalk formed by the gamma and epsilon chains, while a peripheral stalk is formed by the delta, b and b' chains.

The protein resides in the cellular thylakoid membrane. F(1)F(0) ATP synthase produces ATP from ADP in the presence of a proton or sodium gradient. F-type ATPases consist of two structural domains, F(1) containing the extramembraneous catalytic core and F(0) containing the membrane proton channel, linked together by a central stalk and a peripheral stalk. During catalysis, ATP synthesis in the catalytic domain of F(1) is coupled via a rotary mechanism of the central stalk subunits to proton translocation. In terms of biological role, component of the F(0) channel, it forms part of the peripheral stalk, linking F(1) to F(0). Functionally, the complex from the organism is particularly stable to disruption and remains functional after 6 hrs at 55 degrees Celsius. This chain is ATP synthase subunit b, found in Thermosynechococcus vestitus (strain NIES-2133 / IAM M-273 / BP-1).